A 235-amino-acid polypeptide reads, in one-letter code: 5'-methylthioadenosine/S-adenosylhomocysteine nucleosidase (235 aa).

Residue E12 is the Proton acceptor of the active site. Substrate-binding positions include G78, M153, and 174–175 (ME). D198 functions as the Proton donor in the catalytic mechanism.

It belongs to the PNP/UDP phosphorylase family. MtnN subfamily.

The enzyme catalyses S-adenosyl-L-homocysteine + H2O = S-(5-deoxy-D-ribos-5-yl)-L-homocysteine + adenine. It catalyses the reaction S-methyl-5'-thioadenosine + H2O = 5-(methylsulfanyl)-D-ribose + adenine. The catalysed reaction is 5'-deoxyadenosine + H2O = 5-deoxy-D-ribose + adenine. It functions in the pathway amino-acid biosynthesis; L-methionine biosynthesis via salvage pathway; S-methyl-5-thio-alpha-D-ribose 1-phosphate from S-methyl-5'-thioadenosine (hydrolase route): step 1/2. Functionally, catalyzes the irreversible cleavage of the glycosidic bond in both 5'-methylthioadenosine (MTA) and S-adenosylhomocysteine (SAH/AdoHcy) to adenine and the corresponding thioribose, 5'-methylthioribose and S-ribosylhomocysteine, respectively. Also cleaves 5'-deoxyadenosine, a toxic by-product of radical S-adenosylmethionine (SAM) enzymes, into 5-deoxyribose and adenine. The protein is 5'-methylthioadenosine/S-adenosylhomocysteine nucleosidase of Pseudoalteromonas translucida (strain TAC 125).